Consider the following 50-residue polypeptide: Sperm protamine P1 (50 aa).

This sequence belongs to the protamine P1 family. As to expression, testis.

The protein localises to the nucleus. The protein resides in the chromosome. Functionally, protamines substitute for histones in the chromatin of sperm during the haploid phase of spermatogenesis. They compact sperm DNA into a highly condensed, stable and inactive complex. The protein is Sperm protamine P1 (PRM1) of Trachypithecus vetulus (Purple-faced langur).